A 704-amino-acid chain; its full sequence is Polyribonucleotide nucleotidyltransferase (704 aa).

Residues Asp-487 and Asp-493 each contribute to the Mg(2+) site. Residues 554-613 (PRLLTIKIHPDKIREVIGKGGSTIQAITKETGTQIDIQDDGTIIIASVNAIAAQAAKSRI) form the KH domain. In terms of domain architecture, S1 motif spans 623–691 (GRIYEGKVAK…KQGRIRLSIK (69 aa)).

It belongs to the polyribonucleotide nucleotidyltransferase family. As to quaternary structure, component of the RNA degradosome, which is a multiprotein complex involved in RNA processing and mRNA degradation. The cofactor is Mg(2+).

It localises to the cytoplasm. The enzyme catalyses RNA(n+1) + phosphate = RNA(n) + a ribonucleoside 5'-diphosphate. In terms of biological role, involved in mRNA degradation. Catalyzes the phosphorolysis of single-stranded polyribonucleotides processively in the 3'- to 5'-direction. In Xanthomonas campestris pv. campestris (strain B100), this protein is Polyribonucleotide nucleotidyltransferase.